The chain runs to 587 residues: Cyclic di-GMP phosphodiesterase PA2567 (587 aa).

Positions 28-157 constitute a GAF domain; that stretch reads DEVFEEILAA…LEHFARLVMA (130 aa). Positions 192 to 327 constitute a GGDEF domain; sequence GALTVIAADL…GVGWARYNPP (136 aa). The EAL domain maps to 335–587; sequence AFTLLTSLSQ…PEQLEDWLRR (253 aa).

It carries out the reaction 3',3'-c-di-GMP + H2O = 5'-phosphoguanylyl(3'-&gt;5')guanosine + H(+). Functionally, phosphodiesterase (PDE) that catalyzes the hydrolysis of cyclic diguanylate (c-di-GMP) to 5'-pGpG. The chain is Cyclic di-GMP phosphodiesterase PA2567 from Pseudomonas aeruginosa (strain ATCC 15692 / DSM 22644 / CIP 104116 / JCM 14847 / LMG 12228 / 1C / PRS 101 / PAO1).